Reading from the N-terminus, the 357-residue chain is tRNA/tmRNA (uracil-C(5))-methyltransferase (357 aa).

S-adenosyl-L-methionine is bound by residues glutamine 180, tyrosine 209, asparagine 214, glutamate 230, and aspartate 290. Catalysis depends on cysteine 315, which acts as the Nucleophile. Catalysis depends on glutamate 349, which acts as the Proton acceptor.

This sequence belongs to the class I-like SAM-binding methyltransferase superfamily. RNA M5U methyltransferase family. TrmA subfamily.

It carries out the reaction uridine(54) in tRNA + S-adenosyl-L-methionine = 5-methyluridine(54) in tRNA + S-adenosyl-L-homocysteine + H(+). The catalysed reaction is uridine(341) in tmRNA + S-adenosyl-L-methionine = 5-methyluridine(341) in tmRNA + S-adenosyl-L-homocysteine + H(+). In terms of biological role, dual-specificity methyltransferase that catalyzes the formation of 5-methyluridine at position 54 (m5U54) in all tRNAs, and that of position 341 (m5U341) in tmRNA (transfer-mRNA). This chain is tRNA/tmRNA (uracil-C(5))-methyltransferase, found in Campylobacter jejuni subsp. jejuni serotype O:23/36 (strain 81-176).